Here is a 352-residue protein sequence, read N- to C-terminus: Protein O-mannose kinase (352 aa).

Residues 1–16 (MERKPSVCRKSGSWNC) lie on the Cytoplasmic side of the membrane. A helical; Signal-anchor for type II membrane protein transmembrane segment spans residues 17–37 (LLVLFLLLLFTVVSVNFLLYM). At 38-352 (YIDQMYAPSR…MAVAETREML (315 aa)) the chain is on the lumenal side. The region spanning 82–352 (VRKLKLVGEG…MAVAETREML (271 aa)) is the Protein kinase domain.

The protein belongs to the protein kinase superfamily. Ser/Thr protein kinase family. STKL subfamily.

The protein localises to the endoplasmic reticulum membrane. The enzyme catalyses 3-O-[beta-D-GalNAc-(1-&gt;3)-beta-D-GlcNAc-(1-&gt;4)-alpha-D-Man]-L-Thr-[protein] + ATP = 3-O-[beta-D-GalNAc-(1-&gt;3)-beta-D-GlcNAc-(1-&gt;4)-(O-6-P-alpha-D-Man)]-Thr-[protein] + ADP + H(+). Functionally, protein O-mannose kinase that specifically mediates phosphorylation at the 6-position of an O-mannose of the trisaccharide (N-acetylgalactosamine (GalNAc)-beta-1,3-N-acetylglucosamine (GlcNAc)-beta-1,4-mannose) to generate phosphorylated O-mannosyl trisaccharide (N-acetylgalactosamine-beta-1,3-N-acetylglucosamine-beta-1,4-(phosphate-6-)mannose). Phosphorylated O-mannosyl trisaccharide is a carbohydrate structure present in alpha-dystroglycan (dag1), which is required for binding laminin G-like domain-containing extracellular proteins with high affinity. Only shows kinase activity when the GalNAc-beta-3-GlcNAc-beta-terminus is linked to the 4-position of O-mannose, suggesting that this disaccharide serves as the substrate recognition motif. This is Protein O-mannose kinase (pomk) from Xenopus laevis (African clawed frog).